The chain runs to 203 residues: Chemotactic transduction protein ChpE (203 aa).

5 helical membrane passes run 3 to 23, 46 to 66, 69 to 89, 123 to 143, and 149 to 169; these read AIFL…GAVF, LIGD…LLGY, VRIP…VQGL, NVVY…GTPN, and VFFA…AALV.

It belongs to the Rht family.

The protein localises to the cell membrane. This is Chemotactic transduction protein ChpE (chpE) from Pseudomonas aeruginosa (strain ATCC 15692 / DSM 22644 / CIP 104116 / JCM 14847 / LMG 12228 / 1C / PRS 101 / PAO1).